Reading from the N-terminus, the 423-residue chain is Putative competence-damage inducible protein (423 aa).

Belongs to the CinA family.

The polypeptide is Putative competence-damage inducible protein (Streptococcus pyogenes serotype M3 (strain ATCC BAA-595 / MGAS315)).